We begin with the raw amino-acid sequence, 397 residues long: Succinyl-diaminopimelate desuccinylase (397 aa).

A Zn(2+)-binding site is contributed by histidine 73. Residue aspartate 75 is part of the active site. Residue aspartate 106 coordinates Zn(2+). Glutamate 140 acts as the Proton acceptor in catalysis. Zn(2+) is bound by residues glutamate 141, glutamate 169, and histidine 366.

Belongs to the peptidase M20A family. DapE subfamily. Homodimer. The cofactor is Zn(2+). Co(2+) serves as cofactor.

It carries out the reaction N-succinyl-(2S,6S)-2,6-diaminopimelate + H2O = (2S,6S)-2,6-diaminopimelate + succinate. It functions in the pathway amino-acid biosynthesis; L-lysine biosynthesis via DAP pathway; LL-2,6-diaminopimelate from (S)-tetrahydrodipicolinate (succinylase route): step 3/3. Its function is as follows. Catalyzes the hydrolysis of N-succinyl-L,L-diaminopimelic acid (SDAP), forming succinate and LL-2,6-diaminopimelate (DAP), an intermediate involved in the bacterial biosynthesis of lysine and meso-diaminopimelic acid, an essential component of bacterial cell walls. The chain is Succinyl-diaminopimelate desuccinylase from Rhizobium etli (strain ATCC 51251 / DSM 11541 / JCM 21823 / NBRC 15573 / CFN 42).